Here is a 483-residue protein sequence, read N- to C-terminus: MDGAVMEGPLFLQSQRFGTKRWRKTWAVLYPASPHGVARLEFFDHKGSSSGGGRGSSRRLDCKVIRLAECVSVAPVAVESPPEPGAASFRLDTAQRSHLLAADAPSSAAWVQTLCQNAFPKGSWALAPAENPPKLSALEMLENSLYSPSWEGSQFWVTVQKTEAAERCGLHGSYVLRVEAERLTLLAPGAQRQILEPLLFWPYTLLRRYGRDKVMFSFEAGRRCPSGPGTFTFQTAQGNDIFQAVETAIHRQKIQGKAGQGQDVLRADSHEGEVADGKLASLAAPLELPGSPPALYSEPLDSLRIPPGPSQDSLYSDPLDSTPARAGEGTQLKKALYWDLCEHVQQKLIKAKLTDPKEDPIYDEPEGLAPATLRGLYDLPQEPKDAWWCQARVKEEGYELPYNPAMDDYAVPPPRSTKPFPAPKPQGLALSESGAATGSGSQGHSSDTALYSQVQKSGASGSWDCGLSGVVTDRTGAKSEGST.

Position 1 is an N-acetylmethionine (Met-1). Residues 4 to 119 form the PH domain; the sequence is AVMEGPLFLQ…WVQTLCQNAF (116 aa). Ser-48 bears the Phosphoserine mark. An IRS-type PTB domain is found at 151–259; the sequence is EGSQFWVTVQ…HRQKIQGKAG (109 aa). Ser-269 and Ser-291 each carry phosphoserine. The interval 293–326 is disordered; it reads PALYSEPLDSLRIPPGPSQDSLYSDPLDSTPARA. A phosphotyrosine mark is found at Tyr-296, Tyr-337, Tyr-362, Tyr-377, Tyr-398, and Tyr-409. Positions 409–483 are disordered; sequence YAVPPPRSTK…RTGAKSEGST (75 aa). Residues 411-424 are compositionally biased toward pro residues; the sequence is VPPPRSTKPFPAPK. Position 416 is a phosphoserine (Ser-416). Residues 434 to 460 show a composition bias toward polar residues; the sequence is GAATGSGSQGHSSDTALYSQVQKSGAS. Tyr-451 is subject to Phosphotyrosine. A Phosphoserine modification is found at Ser-462.

The protein belongs to the DOK family. Type A subfamily. As to quaternary structure, interacts with RasGAP, INPP5D/SHIP1 and ABL1. Interacts directly with phosphorylated ITGB3. Interacts with SRMS (via the SH2 and SH3 domains). In terms of processing, constitutively tyrosine-phosphorylated. Phosphorylated by TEC. Phosphorylated by LYN. Phosphorylated on tyrosine residues by the insulin receptor kinase. Results in the negative regulation of the insulin signaling pathway. Phosphorylated on tyrosine residues by SRMS.

The protein resides in the cytoplasm. It is found in the nucleus. Functionally, DOK proteins are enzymatically inert adaptor or scaffolding proteins. They provide a docking platform for the assembly of multimolecular signaling complexes. DOK1 appears to be a negative regulator of the insulin signaling pathway. Modulates integrin activation by competing with talin for the same binding site on ITGB3. In Bos taurus (Bovine), this protein is Docking protein 1 (DOK1).